A 390-amino-acid chain; its full sequence is UPF0229 protein Cbei_0567 (390 aa).

Positions 77 to 108 are disordered; the sequence is SGVGNEKRGEKLGNGNKKLAKGNQGAGNEEGD. Residues 89-103 are compositionally biased toward low complexity; that stretch reads GNGNKKLAKGNQGAG.

This sequence belongs to the UPF0229 family.

This chain is UPF0229 protein Cbei_0567, found in Clostridium beijerinckii (strain ATCC 51743 / NCIMB 8052) (Clostridium acetobutylicum).